Reading from the N-terminus, the 206-residue chain is Amelogenin, Y isoform (206 aa).

The first 16 residues, 1 to 16, serve as a signal peptide directing secretion; sequence MGTWILFACLVGAAFA. The segment at 118–180 is disordered; the sequence is VPGQQSMTPT…PPLPPMFPLR (63 aa). Residues 128 to 142 are compositionally biased toward low complexity; sequence QHHQPNLPLPAQQPF. Pro residues predominate over residues 143 to 180; that stretch reads QPQPVQPQPHQPMQPQPPVQPMQPLLPQPPLPPMFPLR.

This sequence belongs to the amelogenin family.

It localises to the secreted. It is found in the extracellular space. Its subcellular location is the extracellular matrix. Plays a role in biomineralization. Seems to regulate the formation of crystallites during the secretory stage of tooth enamel development. Thought to play a major role in the structural organization and mineralization of developing enamel. This is Amelogenin, Y isoform (AMELY) from Homo sapiens (Human).